A 265-amino-acid polypeptide reads, in one-letter code: Hydroxyethylthiazole kinase (265 aa).

Substrate is bound at residue Met-36. Lys-112 and Ser-160 together coordinate ATP. Substrate is bound at residue Gly-187.

The protein belongs to the Thz kinase family. It depends on Mg(2+) as a cofactor.

The catalysed reaction is 5-(2-hydroxyethyl)-4-methylthiazole + ATP = 4-methyl-5-(2-phosphooxyethyl)-thiazole + ADP + H(+). Its pathway is cofactor biosynthesis; thiamine diphosphate biosynthesis; 4-methyl-5-(2-phosphoethyl)-thiazole from 5-(2-hydroxyethyl)-4-methylthiazole: step 1/1. In terms of biological role, catalyzes the phosphorylation of the hydroxyl group of 4-methyl-5-beta-hydroxyethylthiazole (THZ). This Clostridium perfringens (strain SM101 / Type A) protein is Hydroxyethylthiazole kinase.